Reading from the N-terminus, the 359-residue chain is Photosystem II protein D1 1 (359 aa).

The next 3 helical transmembrane spans lie at 29-46 (YVGW…AATI), 118-133 (HFLI…EWEL), and 142-156 (WICV…AASA). Histidine 118 contacts chlorophyll a. Pheophytin a is bound at residue tyrosine 126. [CaMn4O5] cluster is bound by residues aspartate 170 and glutamate 189. A helical transmembrane segment spans residues 197-218 (FHMLGVAGVFGGSLFSAMHGSL). A chlorophyll a-binding site is contributed by histidine 198. A quinone-binding positions include histidine 215 and 264–265 (SF). A Fe cation-binding site is contributed by histidine 215. Histidine 272 is a Fe cation binding site. The chain crosses the membrane as a helical span at residues 274–288 (FLAAWPVVGIWFTAL). Residues histidine 332, glutamate 333, aspartate 342, and alanine 344 each coordinate [CaMn4O5] cluster. The propeptide occupies 345–359 (AAESTPVALQAPAIG).

It belongs to the reaction center PufL/M/PsbA/D family. As to quaternary structure, PSII is composed of 1 copy each of membrane proteins PsbA, PsbB, PsbC, PsbD, PsbE, PsbF, PsbH, PsbI, PsbJ, PsbK, PsbL, PsbM, PsbT, PsbX, PsbY, PsbZ, Psb30/Ycf12, peripheral proteins PsbO, CyanoQ (PsbQ), PsbU, PsbV and a large number of cofactors. It forms dimeric complexes. The D1/D2 heterodimer binds P680, chlorophylls that are the primary electron donor of PSII, and subsequent electron acceptors. It shares a non-heme iron and each subunit binds pheophytin, quinone, additional chlorophylls, carotenoids and lipids. D1 provides most of the ligands for the Mn4-Ca-O5 cluster of the oxygen-evolving complex (OEC). There is also a Cl(-1) ion associated with D1 and D2, which is required for oxygen evolution. The PSII complex binds additional chlorophylls, carotenoids and specific lipids. is required as a cofactor. Tyr-161 forms a radical intermediate that is referred to as redox-active TyrZ, YZ or Y-Z. Post-translationally, C-terminally processed by CtpA; processing is essential to allow assembly of the oxygen-evolving complex and thus photosynthetic growth.

The protein resides in the cellular thylakoid membrane. It carries out the reaction 2 a plastoquinone + 4 hnu + 2 H2O = 2 a plastoquinol + O2. Its function is as follows. Photosystem II (PSII) is a light-driven water:plastoquinone oxidoreductase that uses light energy to abstract electrons from H(2)O, generating O(2) and a proton gradient subsequently used for ATP formation. It consists of a core antenna complex that captures photons, and an electron transfer chain that converts photonic excitation into a charge separation. The D1/D2 (PsbA/PsbD) reaction center heterodimer binds P680, the primary electron donor of PSII as well as several subsequent electron acceptors. In Parasynechococcus marenigrum (strain WH8102), this protein is Photosystem II protein D1 1.